The following is a 185-amino-acid chain: Ribosome-recycling factor (185 aa).

Belongs to the RRF family.

The protein localises to the cytoplasm. Responsible for the release of ribosomes from messenger RNA at the termination of protein biosynthesis. May increase the efficiency of translation by recycling ribosomes from one round of translation to another. This Corynebacterium diphtheriae (strain ATCC 700971 / NCTC 13129 / Biotype gravis) protein is Ribosome-recycling factor.